Reading from the N-terminus, the 207-residue chain is Outer-membrane lipoprotein LolB (207 aa).

The N-terminal stretch at 1–21 (MPMRKRHFYRLLPLASLLLAA) is a signal peptide. Residue Cys22 is the site of N-palmitoyl cysteine attachment. Cys22 carries the S-diacylglycerol cysteine lipid modification.

The protein belongs to the LolB family. As to quaternary structure, monomer.

It localises to the cell outer membrane. Plays a critical role in the incorporation of lipoproteins in the outer membrane after they are released by the LolA protein. This is Outer-membrane lipoprotein LolB from Yersinia pseudotuberculosis serotype O:3 (strain YPIII).